Consider the following 510-residue polypeptide: MSVIRALHRQLVTKERSAEEIAREYLERLAQLEPQLKSFITVTEELALQQARAVDARIRAGEAIGPLAGIPLAVKDNLCTQGIRTTCASRMLEGFIPPYESTVTARLAAAGMVTVGKTNLDEFAMGSSTENSAFQRTANPWDLTRVPGGSSGGSAAAVAADQAVVALGSDTGGSIRQPAAFCGVVGLKPTYGLVSRYGLVAFASSLDQVGPFGRTVEDVALLLQGIAGHDPMDSTSLKVDIPDYSQALIPDIKGFKIGVIRDLLGEGCGEETRAAVQAAIQHLQELGAEILEIDCPSFRYGLATYYIIAPSEASANLARYDGVKYGLREPADSLLSMYGKTRAHGFGPEVKRRIMIGTYALSSGYYDAYYLKAQKVRTLIKQDFLKAFEKVDVLVSPTTPTPAFKLGEREDPLSMYLCDLMTIPVNLAGLPGLSLPCGFADGLPIGLQIVGNALQESKVLRVAYAYEQSTDWHKRRPPLGQPSVKEGQGSDPGQPQAKRRSGKRSKKSKS.

Residues lysine 75 and serine 150 each act as charge relay system in the active site. Residue serine 174 is the Acyl-ester intermediate of the active site. Residues 471–510 form a disordered region; the sequence is DWHKRRPPLGQPSVKEGQGSDPGQPQAKRRSGKRSKKSKS. The span at 497-510 shows a compositional bias: basic residues; that stretch reads AKRRSGKRSKKSKS.

Belongs to the amidase family. GatA subfamily. Heterotrimer of A, B and C subunits.

The enzyme catalyses L-glutamyl-tRNA(Gln) + L-glutamine + ATP + H2O = L-glutaminyl-tRNA(Gln) + L-glutamate + ADP + phosphate + H(+). In terms of biological role, allows the formation of correctly charged Gln-tRNA(Gln) through the transamidation of misacylated Glu-tRNA(Gln) in organisms which lack glutaminyl-tRNA synthetase. The reaction takes place in the presence of glutamine and ATP through an activated gamma-phospho-Glu-tRNA(Gln). The protein is Glutamyl-tRNA(Gln) amidotransferase subunit A of Synechococcus sp. (strain JA-2-3B'a(2-13)) (Cyanobacteria bacterium Yellowstone B-Prime).